A 292-amino-acid polypeptide reads, in one-letter code: 4-hydroxybenzoate octaprenyltransferase (292 aa).

The next 8 membrane-spanning stretches (helical) occupy residues 23–43 (PIGI…AGEG), 47–67 (PGVA…GCVI), 98–118 (LILF…MNWL), 141–161 (HLPQ…TFAA), 164–184 (GSIP…ALIY), 211–231 (YDRE…AGIG), 233–253 (YLGL…FSVY), and 270–290 (FLNN…DYLW).

The protein belongs to the UbiA prenyltransferase family. The cofactor is Mg(2+).

It localises to the cell inner membrane. The catalysed reaction is all-trans-octaprenyl diphosphate + 4-hydroxybenzoate = 4-hydroxy-3-(all-trans-octaprenyl)benzoate + diphosphate. It functions in the pathway cofactor biosynthesis; ubiquinone biosynthesis. Functionally, catalyzes the prenylation of para-hydroxybenzoate (PHB) with an all-trans polyprenyl group. Mediates the second step in the final reaction sequence of ubiquinone-8 (UQ-8) biosynthesis, which is the condensation of the polyisoprenoid side chain with PHB, generating the first membrane-bound Q intermediate 3-octaprenyl-4-hydroxybenzoate. This is 4-hydroxybenzoate octaprenyltransferase from Methylococcus capsulatus (strain ATCC 33009 / NCIMB 11132 / Bath).